We begin with the raw amino-acid sequence, 202 residues long: Protein TIFY 11g (202 aa).

Over residues 1 to 11 (MDAVGAAGGGA) the composition is skewed to gly residues. The interval 1–31 (MDAVGAAGGGAMLPAAARRGQPPQPPCMTTA) is disordered. Residues 12–21 (MLPAAARRGQ) show a composition bias toward low complexity. The Tify domain occupies 101–136 (ATAPTAPLTIVYGGQVLVFEHYTAEAAEKLVQRTQH). Positions 185–200 (PIARKASLQRFLQKRK) match the Jas motif. The Nuclear localization signal signature appears at 187–194 (ARKASLQR).

It belongs to the TIFY/JAZ family. Post-translationally, ubiquitinated. Targeted for degradation by the SCF(COI1) E3 ubiquitin ligase-proteasome pathway during jasmonate signaling.

It is found in the nucleus. Its function is as follows. Repressor of jasmonate responses. This chain is Protein TIFY 11g, found in Oryza sativa subsp. japonica (Rice).